The following is a 241-amino-acid chain: Aspartate/glutamate leucyltransferase (241 aa).

Belongs to the R-transferase family. Bpt subfamily.

The protein resides in the cytoplasm. It carries out the reaction N-terminal L-glutamyl-[protein] + L-leucyl-tRNA(Leu) = N-terminal L-leucyl-L-glutamyl-[protein] + tRNA(Leu) + H(+). The enzyme catalyses N-terminal L-aspartyl-[protein] + L-leucyl-tRNA(Leu) = N-terminal L-leucyl-L-aspartyl-[protein] + tRNA(Leu) + H(+). Functionally, functions in the N-end rule pathway of protein degradation where it conjugates Leu from its aminoacyl-tRNA to the N-termini of proteins containing an N-terminal aspartate or glutamate. The sequence is that of Aspartate/glutamate leucyltransferase from Helicobacter hepaticus (strain ATCC 51449 / 3B1).